The chain runs to 54 residues: ATP synthase F(0) complex subunit 8 (54 aa).

Residues 9–25 traverse the membrane as a helical segment; it reads WVFLFFLVWLVLGFLGL.

This sequence belongs to the ATPase protein 8 family. Component of the ATP synthase complex composed at least of ATP5F1A/subunit alpha, ATP5F1B/subunit beta, ATP5MC1/subunit c (homooctomer), MT-ATP6/subunit a, MT-ATP8/subunit 8, ATP5ME/subunit e, ATP5MF/subunit f, ATP5MG/subunit g, ATP5MK/subunit k, ATP5MJ/subunit j, ATP5F1C/subunit gamma, ATP5F1D/subunit delta, ATP5F1E/subunit epsilon, ATP5PF/subunit F6, ATP5PB/subunit b, ATP5PD/subunit d, ATP5PO/subunit OSCP. ATP synthase complex consists of a soluble F(1) head domain (subunits alpha(3) and beta(3)) - the catalytic core - and a membrane F(0) domain - the membrane proton channel (subunits c, a, 8, e, f, g, k and j). These two domains are linked by a central stalk (subunits gamma, delta, and epsilon) rotating inside the F1 region and a stationary peripheral stalk (subunits F6, b, d, and OSCP).

It is found in the mitochondrion membrane. Subunit 8, of the mitochondrial membrane ATP synthase complex (F(1)F(0) ATP synthase or Complex V) that produces ATP from ADP in the presence of a proton gradient across the membrane which is generated by electron transport complexes of the respiratory chain. ATP synthase complex consist of a soluble F(1) head domain - the catalytic core - and a membrane F(1) domain - the membrane proton channel. These two domains are linked by a central stalk rotating inside the F(1) region and a stationary peripheral stalk. During catalysis, ATP synthesis in the catalytic domain of F(1) is coupled via a rotary mechanism of the central stalk subunits to proton translocation. In vivo, can only synthesize ATP although its ATP hydrolase activity can be activated artificially in vitro. Part of the complex F(0) domain. The protein is ATP synthase F(0) complex subunit 8 of Branchiostoma lanceolatum (Common lancelet).